The sequence spans 154 residues: Vimentin (154 aa).

Over residues 1–13 (MSTRSVSSSSYRR) the composition is skewed to low complexity. Positions 1-31 (MSTRSVSSSSYRRMFGGPGTASRPSSTRSYV) are disordered. Residue Ser2 is modified to N-acetylserine. Residues 2 to 95 (STRSVSSSSY…FSLADAINTE (94 aa)) are head. Ser5 is subject to Phosphoserine. Phosphoserine; by PKA and PKC; alternate is present on Ser7. O-linked (GlcNAc) serine; alternate glycosylation occurs at Ser7. Ser8 bears the Phosphoserine mark. A phosphoserine; by PKC mark is found at Ser9 and Ser10. Thr20 carries the phosphothreonine modification. Position 25 is a phosphoserine; by PKA and PKC (Ser25). Ser26 carries the post-translational modification Phosphoserine; by PKC. Residue Thr33 is glycosylated (O-linked (GlcNAc) threonine). Ser34 is a glycosylation site (O-linked (GlcNAc) serine; alternate). Ser34 bears the Phosphoserine; by PKC; alternate mark. Ser39 bears the Phosphoserine; by CaMK2, PKA, PKC and ROCK2 mark. At Ser42 the chain carries Phosphoserine; by PKC. Phosphoserine is present on Ser49. Phosphotyrosine is present on Tyr53. Phosphoserine is present on Ser55. Residue Ser56 is modified to Phosphoserine; by CDK5 and CDK1. A Phosphotyrosine modification is found at Tyr61. Position 66 is a phosphoserine; by PKA and PKC (Ser66). Ser72 is modified (phosphoserine; by AURKB and ROCK2). Ser83 bears the Phosphoserine; by CaMK2 mark. Phosphoserine is present on Ser87. The tract at residues 96–131 (FKNTRTNEKVELQELNDRFANYIDKVRFLEQQNKIL) is coil 1A. The stretch at 96–131 (FKNTRTNEKVELQELNDRFANYIDKVRFLEQQNKIL) forms a coiled coil. In terms of domain architecture, IF rod spans 103-154 (EKVELQELNDRFANYIDKVRFLEQQNKILLAELEQLKGQGKSRLGHLYEEEM). Residue Lys104 forms a Glycyl lysine isopeptide (Lys-Gly) (interchain with G-Cter in SUMO2) linkage. Tyr117 bears the Phosphotyrosine mark. An N6-acetyllysine; alternate mark is found at Lys120, Lys129, and Lys139. Lys120 and Lys129 each carry N6-succinyllysine; alternate. Glycyl lysine isopeptide (Lys-Gly) (interchain with G-Cter in SUMO2); alternate cross-links involve residues Lys120, Lys129, and Lys139. Residues 132–153 (LAELEQLKGQGKSRLGHLYEEE) form a linker 1 region. Ser144 is modified (phosphoserine). Position 154 (Met154) is a region of interest, coil 1B.

It belongs to the intermediate filament family. In terms of assembly, homomer assembled from elementary dimers. Identified in complexes that contain VIM, EZR, AHNAK, BFSP1, BFSP2, ANK2, PLEC, PRX and spectrin. Interacts with BCAS3. Interacts with LGSN. Interacts with SYNM. Interacts (via rod region) with PLEC (via CH 1 domain). Interacts with STK33. Interacts with LARP6. Interacts with RAB8B. Interacts with TOR1A; the interaction associates TOR1A with the cytoskeleton. Interacts with TOR1AIP1. Interacts with TOR1AIP1. Interacts with DIAPH1. Interacts with EPPK1; interaction is dependent of higher-order structure of intermediate filament. Interacts with the non-receptor tyrosine kinase SRMS; the interaction leads to phosphorylation of VIM. Interacts with NOD2. Interacts (via head region) with CORO1C. Interacts with HDGF. Interacts with PRKCE (via phorbol-ester/DAG-type 2 domain). Interacts with BFSP2. Interacts with PPL. Interacts with PKP1 and PKP2. Interacts with SCRIB (via PDZ domains); the interaction protects SCRIB from proteasomal degradation and facilitates SCRIB localization to intermediate filaments, the interaction is reduced by cell contact inhibition. In terms of processing, one of the most prominent phosphoproteins in various cells of mesenchymal origin. Phosphorylation is enhanced during cell division, at which time vimentin filaments are significantly reorganized. Phosphorylation by PKN1 inhibits the formation of filaments. Filament disassembly during mitosis is promoted by phosphorylation at Ser-55 as well as by nestin. Phosphorylated at Ser-56 by CDK5 during neutrophil secretion in the cytoplasm. Phosphorylated by STK33. Phosphorylated on tyrosine residues by SRMS.

It localises to the cytoplasm. The protein localises to the cytoskeleton. Its subcellular location is the nucleus matrix. The protein resides in the cell membrane. Its function is as follows. Vimentins are class-III intermediate filaments found in various non-epithelial cells, especially mesenchymal cells. Vimentin is attached to the nucleus, endoplasmic reticulum, and mitochondria, either laterally or terminally. Plays a role in cell directional movement, orientation, cell sheet organization and Golgi complex polarization at the cell migration front. Protects SCRIB from proteasomal degradation and facilitates its localization to intermediate filaments in a cell contact-mediated manner. Functionally, involved with LARP6 in the stabilization of type I collagen mRNAs for CO1A1 and CO1A2. This is Vimentin (VIM) from Ovis aries (Sheep).